Here is a 161-residue protein sequence, read N- to C-terminus: Small ribosomal subunit protein uS9 (161 aa).

This sequence belongs to the universal ribosomal protein uS9 family.

This chain is Small ribosomal subunit protein uS9, found in Bartonella henselae (strain ATCC 49882 / DSM 28221 / CCUG 30454 / Houston 1) (Rochalimaea henselae).